The primary structure comprises 446 residues: Tubulin alpha-1B chain (446 aa).

Q11 lines the GTP pocket. A disordered region spans residues 34–55 (GRLMDDSPSKHDSGSTFFSETG). Positions 35-46 (RLMDDSPSKHDS) are enriched in basic and acidic residues. 7 residues coordinate GTP: E69, S138, G142, T143, S177, N204, and N226. Residue E69 coordinates Mg(2+). Residue E252 is part of the active site.

It belongs to the tubulin family. Dimer of alpha and beta chains. A typical microtubule is a hollow water-filled tube with an outer diameter of 25 nm and an inner diameter of 15 nM. Alpha-beta heterodimers associate head-to-tail to form protofilaments running lengthwise along the microtubule wall with the beta-tubulin subunit facing the microtubule plus end conferring a structural polarity. Microtubules usually have 13 protofilaments but different protofilament numbers can be found in some organisms and specialized cells. Requires Mg(2+) as cofactor.

It localises to the cytoplasm. Its subcellular location is the cytoskeleton. It catalyses the reaction GTP + H2O = GDP + phosphate + H(+). In terms of biological role, tubulin is the major constituent of microtubules, a cylinder consisting of laterally associated linear protofilaments composed of alpha- and beta-tubulin heterodimers. Microtubules grow by the addition of GTP-tubulin dimers to the microtubule end, where a stabilizing cap forms. Below the cap, tubulin dimers are in GDP-bound state, owing to GTPase activity of alpha-tubulin. This chain is Tubulin alpha-1B chain (TUB-1B), found in Schizophyllum commune (Split gill fungus).